A 400-amino-acid chain; its full sequence is Haptoglobin (400 aa).

An N-terminal signal peptide occupies residues M1 to A18. Sushi domains follow at residues D28–D83 and A84–A141. 3 disulfides stabilise this stretch: C49-C81, C105-C139, and C143-C260. A Peptidase S1 domain is found at I156–A398. N-linked (GlcNAc...) asparagine glycans are attached at residues N285, N309, and N315. 2 disulfides stabilise this stretch: C303/C334 and C345/C375. Residues V312 to T317 form an interaction with CD163 region.

It belongs to the peptidase S1 family. As to quaternary structure, tetramer of two alpha and two beta chains; disulfide-linked. The hemoglobin/haptoglobin complex is composed of a haptoglobin dimer bound to two hemoglobin alpha-beta dimers. Interacts with CD163. Interacts with ERGIC3. Expressed by the liver and secreted in plasma.

The protein localises to the secreted. The protein resides in the extracellular space. In terms of biological role, as a result of hemolysis, hemoglobin is found to accumulate in the kidney and is secreted in the urine. Haptoglobin captures, and combines with free plasma hemoglobin to allow hepatic recycling of heme iron and to prevent kidney damage. Haptoglobin also acts as an antioxidant, has antibacterial activity and plays a role in modulating many aspects of the acute phase response. Hemoglobin/haptoglobin complexes are rapidly cleared by the macrophage CD163 scavenger receptor expressed on the surface of liver Kupfer cells through an endocytic lysosomal degradation pathway. This is Haptoglobin (HP) from Cervus elaphus (Red deer).